Consider the following 300-residue polypeptide: Elongator complex protein 5 (300 aa).

Phosphoserine is present on serine 252. The segment at 264 to 300 (QQALLRPRPGQATSHIFYEPDAYDDLDQEDPDDDLDI) is disordered. Positions 284–300 (DAYDDLDQEDPDDDLDI) are enriched in acidic residues.

This sequence belongs to the ELP5 family. As to quaternary structure, component of the elongator complex which consists of ELP1, ELP2, ELP3, ELP4, ELP5 and ELP6; in the complex, is required for optimal binding of ELP3 to ELP4. Tyrosine-phosphorylated. As to expression, ubiquitously expressed with high levels in heart, brain, liver, skeletal muscle and testis.

The protein localises to the nucleus. The protein resides in the cytoplasm. The protein operates within tRNA modification; 5-methoxycarbonylmethyl-2-thiouridine-tRNA biosynthesis. Functionally, component of the elongator complex which is required for multiple tRNA modifications, including mcm5U (5-methoxycarbonylmethyl uridine), mcm5s2U (5-methoxycarbonylmethyl-2-thiouridine), and ncm5U (5-carbamoylmethyl uridine). The elongator complex catalyzes formation of carboxymethyluridine in the wobble base at position 34 in tRNAs. Involved in cell migration. The chain is Elongator complex protein 5 from Homo sapiens (Human).